We begin with the raw amino-acid sequence, 345 residues long: MHHNVFTNTPTIPIDVKDRSVSELMDGMLRTGFQGRKLAESVQAWSNMLKEKDTTVLMGLSGAMVPAGMRRVISYLIRERMIDCLVSTGANLFHDSHEALGRKHYVGSHLANDEKLFEHGVDRIYDVFAVEEEFRNADNLIADFAEEIGEISCSSREFMYLLGKELVRRGAAEDSIVVSAYRHNVPIFVPALSDSSIGIGLTIARRRGLKLEIDQIKDVDEITQIVEKSGHTGVVYVGGGVPKNFIQQTEVIASILGMDVPGHEYAIQYTSDSPHWGGLSGCTFDEAVSWGKVAAQAKKVQVFVDATIALPIVAHALHEKTRGVKRTAPVFSWDGPEGLEIAYNE.

Residue K292 is the Nucleophile of the active site.

This sequence belongs to the deoxyhypusine synthase family. Requires NAD(+) as cofactor.

The catalysed reaction is [eIF5A protein]-L-lysine + spermidine = [eIF5A protein]-deoxyhypusine + propane-1,3-diamine. The protein operates within protein modification; eIF5A hypusination. Its function is as follows. Catalyzes the NAD-dependent oxidative cleavage of spermidine and the subsequent transfer of the butylamine moiety of spermidine to the epsilon-amino group of a specific lysine residue of the eIF-5A precursor protein to form the intermediate deoxyhypusine residue. In Methanosarcina mazei (strain ATCC BAA-159 / DSM 3647 / Goe1 / Go1 / JCM 11833 / OCM 88) (Methanosarcina frisia), this protein is Probable deoxyhypusine synthase 2 (dys2).